A 152-amino-acid chain; its full sequence is MKLIASNKKAYFDYEILETLEAGLALLGSEVKALRQTRVNLKDNFVKIIKGEAFLFGVHISYLDTIHAYYKPNERRERKLLLHKKQLLKWQIEASKERLSIVGLKLYFNQRNKAKIQIALVKGKKLHDKRQSLKEKALNKEILADLKHHFKG.

It belongs to the SmpB family.

Its subcellular location is the cytoplasm. Its function is as follows. Required for rescue of stalled ribosomes mediated by trans-translation. Binds to transfer-messenger RNA (tmRNA), required for stable association of tmRNA with ribosomes. tmRNA and SmpB together mimic tRNA shape, replacing the anticodon stem-loop with SmpB. tmRNA is encoded by the ssrA gene; the 2 termini fold to resemble tRNA(Ala) and it encodes a 'tag peptide', a short internal open reading frame. During trans-translation Ala-aminoacylated tmRNA acts like a tRNA, entering the A-site of stalled ribosomes, displacing the stalled mRNA. The ribosome then switches to translate the ORF on the tmRNA; the nascent peptide is terminated with the 'tag peptide' encoded by the tmRNA and targeted for degradation. The ribosome is freed to recommence translation, which seems to be the essential function of trans-translation. This is SsrA-binding protein from Helicobacter pylori (strain Shi470).